Here is a 352-residue protein sequence, read N- to C-terminus: MKKILFIDRDGTLVEEPFDFQVDSLDKIKLTSGVIPALLQLQKAGFTFIMVSNQNGIGTVAFPEEDFAVCHEFILDLFSSQGILFDEIFICPHTPEDNCICRKPKTGLLESYLKETAFAKQYSWVIGDRDTDKEFADNLGVNFLPISKTHTWEMVASAIINDARKASVQRKTKETAVDLSVQLDSDQTSVIDTPIPFFTHMLEQVAKHGGFDLRLQASGDLEVDEHHLIEDTAIALGEAIRTALGDKWGINRYGYTLPMDESLATIAIDISGRSFCDFKGQFTREFIGGMATEMIPHFFQSLSSALGATIHIEVTGINHHHMIEACFKVLGRALRQACSRTNNYLPSTKGVL.

A histidinol-phosphatase region spans residues M1–A163. D8 (nucleophile) is an active-site residue. Positions 8 and 10 each coordinate Mg(2+). D10 (proton donor) is an active-site residue. Residues C91, H93, C99, and C101 each coordinate Zn(2+). Position 128 (D128) interacts with Mg(2+). Residues R164–L352 form an imidazoleglycerol-phosphate dehydratase region.

In the N-terminal section; belongs to the histidinol-phosphatase family. This sequence in the C-terminal section; belongs to the imidazoleglycerol-phosphate dehydratase family. Mg(2+) serves as cofactor. Requires Zn(2+) as cofactor.

The protein resides in the cytoplasm. The catalysed reaction is D-erythro-1-(imidazol-4-yl)glycerol 3-phosphate = 3-(imidazol-4-yl)-2-oxopropyl phosphate + H2O. The enzyme catalyses L-histidinol phosphate + H2O = L-histidinol + phosphate. It functions in the pathway amino-acid biosynthesis; L-histidine biosynthesis; L-histidine from 5-phospho-alpha-D-ribose 1-diphosphate: step 6/9. It participates in amino-acid biosynthesis; L-histidine biosynthesis; L-histidine from 5-phospho-alpha-D-ribose 1-diphosphate: step 8/9. This is Histidine biosynthesis bifunctional protein HisB from Legionella pneumophila (strain Lens).